The following is a 475-amino-acid chain: Zinc finger protein 383 (475 aa).

The 72-residue stretch at 6–77 folds into the KRAB domain; it reads VMFSDVSIDF…GRELTRGLCS (72 aa). C2H2-type zinc fingers lie at residues 170 to 192, 198 to 220, 226 to 248, 254 to 276, 282 to 304, 310 to 332, 338 to 360, 366 to 388, 394 to 416, 422 to 444, and 450 to 472; these read FECK…QRIH, YECK…LKIH, YECK…QRIH, YACK…VRIH, YDCK…QRIH, FECL…QRIH, YECN…LRIH, and YNCK…QGIH.

The protein belongs to the krueppel C2H2-type zinc-finger protein family.

Its subcellular location is the nucleus. The protein resides in the cytoplasm. In terms of biological role, may function as a transcriptional repressor, suppressing transcriptional activities mediated by MAPK signaling pathways. The polypeptide is Zinc finger protein 383 (ZNF383) (Macaca fascicularis (Crab-eating macaque)).